Consider the following 1342-residue polypeptide: DNA-directed RNA polymerase subunit beta (1342 aa).

This sequence belongs to the RNA polymerase beta chain family. The RNAP catalytic core consists of 2 alpha, 1 beta, 1 beta' and 1 omega subunit. When a sigma factor is associated with the core the holoenzyme is formed, which can initiate transcription.

The enzyme catalyses RNA(n) + a ribonucleoside 5'-triphosphate = RNA(n+1) + diphosphate. In terms of biological role, DNA-dependent RNA polymerase catalyzes the transcription of DNA into RNA using the four ribonucleoside triphosphates as substrates. The protein is DNA-directed RNA polymerase subunit beta of Citrobacter koseri (strain ATCC BAA-895 / CDC 4225-83 / SGSC4696).